A 451-amino-acid polypeptide reads, in one-letter code: Exodeoxyribonuclease 7 large subunit (451 aa).

It belongs to the XseA family. As to quaternary structure, heterooligomer composed of large and small subunits.

It localises to the cytoplasm. The catalysed reaction is Exonucleolytic cleavage in either 5'- to 3'- or 3'- to 5'-direction to yield nucleoside 5'-phosphates.. In terms of biological role, bidirectionally degrades single-stranded DNA into large acid-insoluble oligonucleotides, which are then degraded further into small acid-soluble oligonucleotides. This is Exodeoxyribonuclease 7 large subunit from Thiobacillus denitrificans (strain ATCC 25259 / T1).